An 82-amino-acid chain; its full sequence is MPFPKIAEVRELSDEEIANEIAKVKRELFDLRILKATGRIEKTHLFKHNRHRLAQLLTIEKERELAKNAEASTTVSTVENTQ.

It belongs to the universal ribosomal protein uL29 family.

The sequence is that of Large ribosomal subunit protein uL29 from Trichodesmium erythraeum (strain IMS101).